A 779-amino-acid chain; its full sequence is Transcriptional regulator QRICH1 (779 aa).

Met1 carries the post-translational modification N-acetylmethionine. The region spanning 6–48 (ENTISFEEYIRVKARSVPQHRMKEFLDSLASKGPEALQEFQQT) is the CARD domain. Disordered stretches follow at residues 141–163 (QGQAAQPAAPSIQTPSLQSPSPS) and 219–242 (ALSPPPSQQGSPREGERRVGTASV). Ser346 carries the phosphoserine modification. Residues Lys354 and Lys359 each participate in a glycyl lysine isopeptide (Lys-Gly) (interchain with G-Cter in SUMO2) cross-link. Residues 420–430 (QQQPQQQTPQE) show a composition bias toward low complexity. The segment at 420-443 (QQQPQQQTPQEQTPPPPQQQQQQQ) is disordered. Ser467 is subject to Phosphoserine.

The protein resides in the nucleus. It is found in the cytoplasm. Its subcellular location is the cell membrane. Transcriptional regulator that acts as a mediator of the integrated stress response (ISR) through transcriptional control of protein homeostasis under conditions of ER stress. Controls the outcome of the unfolded protein response (UPR), an ER-stress response pathway that either promotes recovery of ER homeostasis and cell survival, or triggers the terminal UPR which elicits programmed cell death when ER stress is prolonged and unresolved. ER stress induces QRICH1 translation by a ribosome translation re-initiation mechanism in response to EIF2S1/eIF-2-alpha phosphorylation, and stress-induced QRICH1 regulates a transcriptional program associated with protein translation, protein secretion-mediated proteotoxicity and cell death during the terminal UPR. May cooperate with ATF4 transcription factor signaling to regulate ER homeostasis which is critical for cell viability. Up-regulates CASP3/caspase-3 activity in epithelial cells under ER stress. Central regulator of proteotoxicity associated with ER stress-mediated inflammatory diseases in the intestines and liver. Involved in chondrocyte hypertrophy, a process required for normal longitudinal bone growth. This Bos taurus (Bovine) protein is Transcriptional regulator QRICH1 (QRICH1).